A 218-amino-acid chain; its full sequence is Octanoyltransferase (218 aa).

One can recognise a BPL/LPL catalytic domain in the interval 32–218 (GDAPEAVWLL…LRTFSRSFPD (187 aa)). Residues 71-78 (RGGQYTYH), 151-153 (AIG), and 164-166 (GLS) contribute to the substrate site. Cys-182 (acyl-thioester intermediate) is an active-site residue.

This sequence belongs to the LipB family.

It is found in the cytoplasm. The enzyme catalyses octanoyl-[ACP] + L-lysyl-[protein] = N(6)-octanoyl-L-lysyl-[protein] + holo-[ACP] + H(+). It functions in the pathway protein modification; protein lipoylation via endogenous pathway; protein N(6)-(lipoyl)lysine from octanoyl-[acyl-carrier-protein]: step 1/2. Functionally, catalyzes the transfer of endogenously produced octanoic acid from octanoyl-acyl-carrier-protein onto the lipoyl domains of lipoate-dependent enzymes. Lipoyl-ACP can also act as a substrate although octanoyl-ACP is likely to be the physiological substrate. The polypeptide is Octanoyltransferase (Cereibacter sphaeroides (strain ATCC 17025 / ATH 2.4.3) (Rhodobacter sphaeroides)).